A 662-amino-acid polypeptide reads, in one-letter code: Serine/threonine kinase-like domain-containing protein STKLD1 (662 aa).

Positions 1 to 202 (MLNPGALGVN…ILDMATCSFL (202 aa)) constitute a Protein kinase domain. ATP-binding positions include 2–10 (LNPGALGVN) and Lys-25. Positions 639-662 (LQEDQLEPPAGQEAPLQGEPLFRP) are disordered.

Belongs to the protein kinase superfamily. Ser/Thr protein kinase family. STKL subfamily.

This is Serine/threonine kinase-like domain-containing protein STKLD1 (Stkld1) from Mus musculus (Mouse).